We begin with the raw amino-acid sequence, 378 residues long: S-adenosylmethionine synthase (378 aa).

Histidine 15 provides a ligand contact to ATP. Aspartate 17 is a Mg(2+) binding site. Position 43 (glutamate 43) interacts with K(+). Residues glutamate 56 and glutamine 99 each contribute to the L-methionine site. The tract at residues 99–109 is flexible loop; sequence QSPDINQGINR. Residues 164–166, 230–231, aspartate 239, 245–246, alanine 262, and lysine 266 contribute to the ATP site; these read DAK, RF, and RK. An L-methionine-binding site is contributed by aspartate 239. Residue lysine 270 coordinates L-methionine.

This sequence belongs to the AdoMet synthase family. Homotetramer; dimer of dimers. Requires Mg(2+) as cofactor. K(+) serves as cofactor.

It is found in the cytoplasm. The catalysed reaction is L-methionine + ATP + H2O = S-adenosyl-L-methionine + phosphate + diphosphate. The protein operates within amino-acid biosynthesis; S-adenosyl-L-methionine biosynthesis; S-adenosyl-L-methionine from L-methionine: step 1/1. In terms of biological role, catalyzes the formation of S-adenosylmethionine (AdoMet) from methionine and ATP. The overall synthetic reaction is composed of two sequential steps, AdoMet formation and the subsequent tripolyphosphate hydrolysis which occurs prior to release of AdoMet from the enzyme. The polypeptide is S-adenosylmethionine synthase (Buchnera aphidicola subsp. Acyrthosiphon pisum (strain 5A)).